Consider the following 678-residue polypeptide: Methionine--tRNA ligase (678 aa).

The 'HIGH' region motif lies at 14–24 (PYANGSIHLGH). Zn(2+) contacts are provided by cysteine 145, cysteine 148, cysteine 158, and cysteine 161. The short motif at 331 to 335 (KMSKS) is the 'KMSKS' region element. An ATP-binding site is contributed by lysine 334. One can recognise a tRNA-binding domain in the interval 576–678 (AFAAVDLRIA…SGAKPGQRVK (103 aa)).

The protein belongs to the class-I aminoacyl-tRNA synthetase family. MetG type 1 subfamily. In terms of assembly, homodimer. It depends on Zn(2+) as a cofactor.

Its subcellular location is the cytoplasm. It carries out the reaction tRNA(Met) + L-methionine + ATP = L-methionyl-tRNA(Met) + AMP + diphosphate. Is required not only for elongation of protein synthesis but also for the initiation of all mRNA translation through initiator tRNA(fMet) aminoacylation. The protein is Methionine--tRNA ligase of Ectopseudomonas mendocina (strain ymp) (Pseudomonas mendocina).